A 118-amino-acid polypeptide reads, in one-letter code: Large ribosomal subunit protein uL18 (118 aa).

This sequence belongs to the universal ribosomal protein uL18 family. Part of the 50S ribosomal subunit; part of the 5S rRNA/L5/L18/L25 subcomplex. Contacts the 5S and 23S rRNAs.

This is one of the proteins that bind and probably mediate the attachment of the 5S RNA into the large ribosomal subunit, where it forms part of the central protuberance. The polypeptide is Large ribosomal subunit protein uL18 (Phenylobacterium zucineum (strain HLK1)).